Consider the following 245-residue polypeptide: 2,3-bisphosphoglycerate-dependent phosphoglycerate mutase (245 aa).

Residues 8 to 15 (RHGQSLWN), 21 to 22 (TG), R60, 87 to 90 (ERHY), K98, 114 to 115 (RR), and 183 to 184 (GN) contribute to the substrate site. The active-site Tele-phosphohistidine intermediate is H9. The Proton donor/acceptor role is filled by E87.

Belongs to the phosphoglycerate mutase family. BPG-dependent PGAM subfamily.

The enzyme catalyses (2R)-2-phosphoglycerate = (2R)-3-phosphoglycerate. The protein operates within carbohydrate degradation; glycolysis; pyruvate from D-glyceraldehyde 3-phosphate: step 3/5. In terms of biological role, catalyzes the interconversion of 2-phosphoglycerate and 3-phosphoglycerate. In Bacillus cytotoxicus (strain DSM 22905 / CIP 110041 / 391-98 / NVH 391-98), this protein is 2,3-bisphosphoglycerate-dependent phosphoglycerate mutase.